Consider the following 359-residue polypeptide: NADH-quinone oxidoreductase subunit H (359 aa).

The next 8 membrane-spanning stretches (helical) occupy residues 19 to 39 (IGWF…FIAL), 94 to 114 (FLFV…FAVL), 127 to 147 (VGLF…LAAG), 166 to 186 (IVSY…LAGT), 202 to 222 (FMHW…IYFI), 266 to 286 (MFMV…SPLP), 301 to 321 (VWGA…QMWL), and 337 to 357 (CWKV…IWVI).

This sequence belongs to the complex I subunit 1 family. In terms of assembly, NDH-1 is composed of 14 different subunits. Subunits NuoA, H, J, K, L, M, N constitute the membrane sector of the complex.

The protein localises to the cell inner membrane. It carries out the reaction a quinone + NADH + 5 H(+)(in) = a quinol + NAD(+) + 4 H(+)(out). Functionally, NDH-1 shuttles electrons from NADH, via FMN and iron-sulfur (Fe-S) centers, to quinones in the respiratory chain. The immediate electron acceptor for the enzyme in this species is believed to be ubiquinone. Couples the redox reaction to proton translocation (for every two electrons transferred, four hydrogen ions are translocated across the cytoplasmic membrane), and thus conserves the redox energy in a proton gradient. This subunit may bind ubiquinone. This Chlorobaculum parvum (strain DSM 263 / NCIMB 8327) (Chlorobium vibrioforme subsp. thiosulfatophilum) protein is NADH-quinone oxidoreductase subunit H.